The primary structure comprises 159 residues: NADH-quinone oxidoreductase subunit I (159 aa).

2 4Fe-4S ferredoxin-type domains span residues 51 to 80 (RRYENGEERCIACKLCEAICPAQAIVIEAD) and 90 to 119 (TRYDIDMTKCIYCGLCQEACPVDAIVEGPN). The [4Fe-4S] cluster site is built by Cys60, Cys63, Cys66, Cys70, Cys99, Cys102, Cys105, and Cys109.

This sequence belongs to the complex I 23 kDa subunit family. As to quaternary structure, NDH-1 is composed of 14 different subunits. Subunits NuoA, H, J, K, L, M, N constitute the membrane sector of the complex. The cofactor is [4Fe-4S] cluster.

The protein localises to the cell membrane. The catalysed reaction is a quinone + NADH + 5 H(+)(in) = a quinol + NAD(+) + 4 H(+)(out). In terms of biological role, NDH-1 shuttles electrons from NADH, via FMN and iron-sulfur (Fe-S) centers, to quinones in the respiratory chain. The immediate electron acceptor for the enzyme in this species is believed to be ubiquinone. Couples the redox reaction to proton translocation (for every two electrons transferred, four hydrogen ions are translocated across the cytoplasmic membrane), and thus conserves the redox energy in a proton gradient. This is NADH-quinone oxidoreductase subunit I from Rickettsia africae (strain ESF-5).